The sequence spans 87 residues: uncharacterized protein (87 aa).

The 2Fe-2S ferredoxin-type domain maps to 4–87; that stretch reads SKIIILNNNK…TISGSILIKI (84 aa). 4 residues coordinate [2Fe-2S] cluster: C39, C44, C47, and C75.

It depends on [2Fe-2S] cluster as a cofactor.

This is an uncharacterized protein from Buchnera aphidicola subsp. Baizongia pistaciae (strain Bp).